A 227-amino-acid polypeptide reads, in one-letter code: Iron-regulated surface determinant protein C (227 aa).

The N-terminal stretch at 1 to 28 (MKNILKVFNTMILALIIIIATFSNTANA) is a signal peptide. Residues 29–150 (ADSGTLNYEV…KFNGPSDVAG (122 aa)) enclose the NEAT domain. Residues S47, I48, Y132, and Y136 each contribute to the heme site. Positions 149–191 (AGANAPGKDDKNSASGSDKGSDGATTGQSESNSSNKDKVENPQ) are disordered. Over residues 161-172 (SASGSDKGSDGA) the composition is skewed to low complexity. Over residues 173–182 (TTGQSESNSS) the composition is skewed to polar residues. The short motif at 189–193 (NPQTN) is the NPQTN sorting signal element. T192 is modified (pentaglycyl murein peptidoglycan amidated threonine). Positions 193–227 (NAGTPAYIYAIPVASLALLIAITLFVRKKSKGNVE) are cleaved as a propeptide — removed by sortase B.

This sequence belongs to the IsdC family. In terms of assembly, monomer. Interacts with IsdA.

It is found in the secreted. Its subcellular location is the cell wall. Its function is as follows. Involved in heme (porphyrin) scavenging. Binds hemoglobin and almost exclusively free-base protoporphyrin IX. Probably has a role as the central conduit of the isd heme uptake system, i.e. mediates the transfer of the iron-containing nutrient from IsdABH to the membrane translocation system IsdDEF. Hemin-free IsdC (apo-IsdC) acquires hemin from hemin-containing IsdA (holo-IsdA) probably through the activated holo-IsdA-apo-IsdC complex and due to the higher affinity of apo-IsdC for the cofactor. The reaction is reversible. In Staphylococcus aureus (strain MRSA252), this protein is Iron-regulated surface determinant protein C (isdC).